A 459-amino-acid polypeptide reads, in one-letter code: Argininosuccinate lyase (459 aa).

It belongs to the lyase 1 family. Argininosuccinate lyase subfamily.

The protein resides in the cytoplasm. The catalysed reaction is 2-(N(omega)-L-arginino)succinate = fumarate + L-arginine. It participates in amino-acid biosynthesis; L-arginine biosynthesis; L-arginine from L-ornithine and carbamoyl phosphate: step 3/3. In Prochlorococcus marinus (strain MIT 9515), this protein is Argininosuccinate lyase.